A 185-amino-acid chain; its full sequence is Translation initiation factor IF-3 (185 aa).

This sequence belongs to the IF-3 family. Monomer.

The protein localises to the cytoplasm. Functionally, IF-3 binds to the 30S ribosomal subunit and shifts the equilibrium between 70S ribosomes and their 50S and 30S subunits in favor of the free subunits, thus enhancing the availability of 30S subunits on which protein synthesis initiation begins. The chain is Translation initiation factor IF-3 from Streptococcus pneumoniae serotype 19F (strain G54).